A 444-amino-acid chain; its full sequence is MHILVVSVNYRTAPVEFREKLTFQAAEIERAMTTLQNQKSVLENVIVSTCNRTEIYAVVDQLHTGRYYIKKFLADWFQLEIEEVAPYLTIFEQDGAIDHLFRVTCGLDSMVVGETQILGQIKDSFLEAQQVKATGTIFNELFKQVITLAKRAHSETTIGESAMSVSYAAVELGKKIFGELTDCHVLILGAGKMGELALQNLYGSGARKVTVMNRTLSKAEVMAEKYMGHAKSLSELQCALLEADILISSTGASEYVITKEMMTKVEKMRSGRPLFMVDIAVPRDIDPAIDELEGSFLYDIDDLQGVVEANRAERLKEAEKIQFMIEEEIVLFKTWLSTLGVVPLISALRDKALAIQSETMVSLERKIPNLSDREKKVISKHTKSIINQLLKDPILVAKEIAAEEGASEKLALFAKIFDLETEEVESRAEEVEHKRVWTPSVPSL.

Substrate contacts are provided by residues 49–52 (TCNR), Ser109, 114–116 (ETQ), and Gln120. The active-site Nucleophile is the Cys50. NADP(+) is bound at residue 189-194 (GAGKMG).

The protein belongs to the glutamyl-tRNA reductase family. In terms of assembly, homodimer.

The enzyme catalyses (S)-4-amino-5-oxopentanoate + tRNA(Glu) + NADP(+) = L-glutamyl-tRNA(Glu) + NADPH + H(+). The protein operates within porphyrin-containing compound metabolism; protoporphyrin-IX biosynthesis; 5-aminolevulinate from L-glutamyl-tRNA(Glu): step 1/2. Its function is as follows. Catalyzes the NADPH-dependent reduction of glutamyl-tRNA(Glu) to glutamate 1-semialdehyde (GSA). In Bacillus cereus (strain ATCC 14579 / DSM 31 / CCUG 7414 / JCM 2152 / NBRC 15305 / NCIMB 9373 / NCTC 2599 / NRRL B-3711), this protein is Glutamyl-tRNA reductase.